The following is a 307-amino-acid chain: MRKIILCSPRGFCAGVIRAIQTVEVALEKWGRPIYVKHEIVHNRHVVDKLREKGAIFIEDLQEVPRNSRVIFSAHGVPPSLREEATERGLIAIDATCGLVTKVHSAVKMYAKKGYHIILIGKRKHVEIIGIRGEAPDQITVVENIAEVEALPFSAQDPLFYVTQTTLSMDDAADIVAALKARYPQIFTLPSSSICYATQNRQGALRNILPQVDFVYVIGDRQSSNSNRLREVAERRGVTARLVNHPDEVTEEILQYSGNIGITAGASTPEDVVQACLMKLQELIPDLSIEMDLFVEEDTVFQLPKEL.

Cys13 is a [4Fe-4S] cluster binding site. The (2E)-4-hydroxy-3-methylbut-2-enyl diphosphate site is built by His42 and His75. The dimethylallyl diphosphate site is built by His42 and His75. Positions 42 and 75 each coordinate isopentenyl diphosphate. Cys97 contacts [4Fe-4S] cluster. Position 125 (His125) interacts with (2E)-4-hydroxy-3-methylbut-2-enyl diphosphate. Dimethylallyl diphosphate is bound at residue His125. Residue His125 coordinates isopentenyl diphosphate. The active-site Proton donor is Glu127. Thr165 lines the (2E)-4-hydroxy-3-methylbut-2-enyl diphosphate pocket. Residue Cys195 participates in [4Fe-4S] cluster binding. Residues Ser223, Ser224, Asn225, and Ser267 each contribute to the (2E)-4-hydroxy-3-methylbut-2-enyl diphosphate site. Dimethylallyl diphosphate-binding residues include Ser223, Ser224, Asn225, and Ser267. Isopentenyl diphosphate-binding residues include Ser223, Ser224, Asn225, and Ser267.

This sequence belongs to the IspH family. Requires [4Fe-4S] cluster as cofactor.

The catalysed reaction is isopentenyl diphosphate + 2 oxidized [2Fe-2S]-[ferredoxin] + H2O = (2E)-4-hydroxy-3-methylbut-2-enyl diphosphate + 2 reduced [2Fe-2S]-[ferredoxin] + 2 H(+). The enzyme catalyses dimethylallyl diphosphate + 2 oxidized [2Fe-2S]-[ferredoxin] + H2O = (2E)-4-hydroxy-3-methylbut-2-enyl diphosphate + 2 reduced [2Fe-2S]-[ferredoxin] + 2 H(+). The protein operates within isoprenoid biosynthesis; dimethylallyl diphosphate biosynthesis; dimethylallyl diphosphate from (2E)-4-hydroxy-3-methylbutenyl diphosphate: step 1/1. It participates in isoprenoid biosynthesis; isopentenyl diphosphate biosynthesis via DXP pathway; isopentenyl diphosphate from 1-deoxy-D-xylulose 5-phosphate: step 6/6. Functionally, catalyzes the conversion of 1-hydroxy-2-methyl-2-(E)-butenyl 4-diphosphate (HMBPP) into a mixture of isopentenyl diphosphate (IPP) and dimethylallyl diphosphate (DMAPP). Acts in the terminal step of the DOXP/MEP pathway for isoprenoid precursor biosynthesis. This Chlamydia trachomatis serovar L2b (strain UCH-1/proctitis) protein is 4-hydroxy-3-methylbut-2-enyl diphosphate reductase.